The sequence spans 101 residues: Small ribosomal subunit protein uS14 (101 aa).

The protein belongs to the universal ribosomal protein uS14 family. As to quaternary structure, part of the 30S ribosomal subunit. Contacts proteins S3 and S10.

Binds 16S rRNA, required for the assembly of 30S particles and may also be responsible for determining the conformation of the 16S rRNA at the A site. The chain is Small ribosomal subunit protein uS14 from Synechococcus sp. (strain JA-2-3B'a(2-13)) (Cyanobacteria bacterium Yellowstone B-Prime).